We begin with the raw amino-acid sequence, 184 residues long: MTLFPLPSTSDPAEADESTKRGEQARALCLRLLTARARTRAELEAALAKRGYPDDIAAAVLDRLTQVGLVDDEDFAEQWVRSRRLNAGKGKRALAAELRKKGVDNEVIDGALAGIDAGAERTRAEQLVRDKLRREKLGDPDDRDAENKVARRLVGMLARRGYNQTMAFDVVTAELANERERRKV.

A disordered region spans residues methionine 1 to arginine 21.

The protein belongs to the RecX family.

The protein resides in the cytoplasm. Its function is as follows. Modulates RecA activity. This is Regulatory protein RecX from Mycolicibacterium vanbaalenii (strain DSM 7251 / JCM 13017 / BCRC 16820 / KCTC 9966 / NRRL B-24157 / PYR-1) (Mycobacterium vanbaalenii).